Here is a 1045-residue protein sequence, read N- to C-terminus: MSDENDNGRPGSNPGGRAPITLKPRQGSVSAGVVKQSFSHGRTKTVVVETKRVRPHAPPAGNLAAPSSAERRQGDAPRQQSSSGGGGSSAGGLSQGEMLARQRAIEAAREHQERQAAERRAAEARAASEAAAARDAAAKSAAAAKAAAAPAPEAPAAPAPTPAPVAQAPAAPVVQAPVVAAPVQAPAAPVAAAPAAPRAEAPRPAPPPVRSDAPRPAPTAGQTRTYEPSRDRRDDRSSTTTYRPGPGAPPQGDRPQGDRPQGDRPFNQRAPRPDGPYNQRTPRPDAGGPPRGPRPEGAGGFRNDRPQGDRPQGDRPQGDRPQGDRPTQTVRYSALAPRPAPGARPGPGGPRGARPGVPASAPATPEIQRATRSAPRPGGDVGRKPEEDDDRRKAAAPGKAVSRAKGAPIRREGRLTIQTVAGDGDSADRMRSLASVRRAREREKEKRRGGPADVVKVAREVIIPDVITVQELSNRMAVRGVEIIKFLMRQGVMLKINDVIDNDTAELVATEFGHTVRRVSEADVEEGFIGAEDVDDHLEPRPPVVTVMGHVDHGKTSLLDALRKADVASGEHGGITQHIGAYQVRLESGQKVTFLDTPGHAAFSQMRARGANITDLVILVVAGDDGVMPQTVEAIKHARAAEVPIIVAVNKMDKPGADSTRVVNELLQHEIVVESLGGDTQIVEVSAKTGQGLDELIERILLLAEVMDLKANPDRTADGVVIEAKLDKGRGAVSTVLVKRGTLKRGDIVVAGSQFGRVRALLNERNEQLTEAGPATPVEILGLDGVPSPGDPFAVVENEARARELTEYRIRLKREKSMHPVGAGATSMADMMAKLQDKKYRELPLVIKADVQGSAEAIIGSLDAMSTDEVRARIILSGAGAISESDVMLAKGAGAPLIGFNVRASAQARALAEREGVEIRYYAIIYDLLDDIKGVLSGMLAPIQRETFLGNAEVLQAFDISKVGKVAGCRVTEGVVRKGAKVRIIRNDIVVLELGTLQTLKRFKDEVPEVPSGQECGMMFAGFQDIKVGDTIECFTVEEIKRQLD.

Disordered stretches follow at residues 1-169 (MSDE…AQAP) and 184-451 (QAPA…RGGP). The span at 83-94 (SGGGGSSAGGLS) shows a compositional bias: gly residues. Positions 103-123 (RAIEAAREHQERQAAERRAAE) are enriched in basic and acidic residues. Positions 124–151 (ARAASEAAAARDAAAKSAAAAKAAAAPA) are enriched in low complexity. Over residues 152-163 (PEAPAAPAPTPA) the composition is skewed to pro residues. Residues 184-199 (QAPAAPVAAAPAAPRA) show a composition bias toward low complexity. 2 stretches are compositionally biased toward basic and acidic residues: residues 227–237 (EPSRDRRDDRS) and 302–323 (RNDRPQGDRPQGDRPQGDRPQG). Pro residues predominate over residues 338–348 (RPAPGARPGPG). Over residues 352–363 (GARPGVPASAPA) the composition is skewed to low complexity. Basic and acidic residues-rich tracts occupy residues 381–393 (VGRKPEEDDDRRK) and 438–450 (RAREREKEKRRGG). The tr-type G domain maps to 540–710 (PRPPVVTVMG…LLLAEVMDLK (171 aa)). Positions 549 to 556 (GHVDHGKT) are G1. Residue 549-556 (GHVDHGKT) participates in GTP binding. The segment at 574–578 (GITQH) is G2. The segment at 596–599 (DTPG) is G3. Residues 596–600 (DTPGH) and 650–653 (NKMD) each bind GTP. The G4 stretch occupies residues 650–653 (NKMD). Residues 686–688 (SAK) form a G5 region.

Belongs to the TRAFAC class translation factor GTPase superfamily. Classic translation factor GTPase family. IF-2 subfamily.

It is found in the cytoplasm. One of the essential components for the initiation of protein synthesis. Protects formylmethionyl-tRNA from spontaneous hydrolysis and promotes its binding to the 30S ribosomal subunits. Also involved in the hydrolysis of GTP during the formation of the 70S ribosomal complex. The sequence is that of Translation initiation factor IF-2 from Caulobacter sp. (strain K31).